The following is a 1358-amino-acid chain: MAYSYTEKKRIRKDFSKLPDVMDVPYLLAIQLDSYREFLQAGVSKDKLRDVGLHAAFKSVFPIISYSGNAALEYVGYRLGEPAFDVKECVLRGVTFAVPLRVKVRLIIFDKESSNKAIKDIKEQEVYMGEIPLMTENGTFIVNGTERVIVSQLHRSPGVFFDHDRGKTHSSGKLLYSARIIPYRGSWLDFEFDPKDAVFVRIDRRRKLPASVLLRALGYSTEEVLDIFYDTNVFHVTEQGLSLELVPQRLRGEIAVFDIKDASGKVIVEQGRRITARHINQLEKAGIKELDVPLEYVLGRTSAKVIVHPSTGEIIAECNSELTQDLLVKIAKAQVVRIETLYTNDIDCGPFISDTLKIDSTTNQLEALVEIYRMMRPGEPPTKDAAETLFNNLFFSAERYDLSAVGRMKFNRRIGREEIEGAGVLSREDIVDVLKTLVDIRNGKGIVDDIDHLGNRRVRCVGEMAENQFRVGLVRVERAVKERLSMAESEGLMPQDLINAKPVAAAVKEFFGSSQLSQFMDQNNPLSEITHKRRVSALGPGGLTRERAGFEVRDVHPTHYGRVCPIETPEGPNIGLINSLAAYARTNQYGFLESPYRVVKEGQVTDEIVFLSAIEEADHVIAQASATLDENGRLIDELVAVRHLNEFTVKAPEDVTLMDVSPRQVVSVAASLIPFLEHDDANRALMGSNMQRQAVPTLRADKPLVGTGMERNVARDSGVCVVARRGGVIDSVDASRIVVRVNNDEVETGEAGVDIYNLTKYTRSNQNTCINQRPLVSKGDQVARGDIMADGPSTDMGELALGQNMRVAFMPWNGFNFEDSICLSERVVQEDRFTTIHIQELTCVARDTKLGPEEITADIPNVGEAALNKLDEAGIVYVGAEVMAGDILVGKVTPKGETQLTPEEKLLRAIFGEKASDVKDTSLRVPTGTKGTVIDVQVFTRDGVERDSRALAIERMQLDEIRKDLNEEFRIVEGATFERLRAALVGAVCEGGAGLKKGTEIDDGILDGLERGQWFKLRMADDALNEQLEKAQAYLADRRQLLDDKFEDKKRKLQQGDDLAPGVLKIVKVYLAIKRRIQPGDKMAGRHGNKGVVSVIMPVEDMPYDANGTPVDIVLNPLGVPSRMNVGQILETHLGLAAKGLGEKINRMLEEQRKVAELRQFLGEVYNEIGGRQKEDLDSLSDSEILDLASNLRGGVPMATPVFDGARETEIKAMLKLADLPESGQMRLFDGRTGNQFERPTTVGYMYMLKLNHLVDDKMHARSTGSYSLVTQQPLGGKAQFGGQRFGEMEVWALEAYGAAYTLQEMLTVKSDDVNGRTKMYKNIVDGDHRMEAGMPESFNVLIKEIRSLGIDIELETE.

Belongs to the RNA polymerase beta chain family. In terms of assembly, the RNAP catalytic core consists of 2 alpha, 1 beta, 1 beta' and 1 omega subunit. When a sigma factor is associated with the core the holoenzyme is formed, which can initiate transcription.

It carries out the reaction RNA(n) + a ribonucleoside 5'-triphosphate = RNA(n+1) + diphosphate. In terms of biological role, DNA-dependent RNA polymerase catalyzes the transcription of DNA into RNA using the four ribonucleoside triphosphates as substrates. In Azotobacter vinelandii (strain DJ / ATCC BAA-1303), this protein is DNA-directed RNA polymerase subunit beta.